A 236-amino-acid chain; its full sequence is Ubiquinone biosynthesis O-methyltransferase (236 aa).

The S-adenosyl-L-methionine site is built by Arg39, Gly59, Asp80, and Met124.

It belongs to the methyltransferase superfamily. UbiG/COQ3 family.

The catalysed reaction is a 3-demethylubiquinol + S-adenosyl-L-methionine = a ubiquinol + S-adenosyl-L-homocysteine + H(+). It carries out the reaction a 3-(all-trans-polyprenyl)benzene-1,2-diol + S-adenosyl-L-methionine = a 2-methoxy-6-(all-trans-polyprenyl)phenol + S-adenosyl-L-homocysteine + H(+). The protein operates within cofactor biosynthesis; ubiquinone biosynthesis. O-methyltransferase that catalyzes the 2 O-methylation steps in the ubiquinone biosynthetic pathway. The protein is Ubiquinone biosynthesis O-methyltransferase of Shewanella putrefaciens (strain CN-32 / ATCC BAA-453).